A 150-amino-acid polypeptide reads, in one-letter code: Ribonuclease K6 (150 aa).

The signal sequence occupies residues methionine 1–alanine 23. Histidine 38 acts as the Proton acceptor in catalysis. Disulfide bonds link cysteine 46/cysteine 104, cysteine 60/cysteine 114, cysteine 78/cysteine 129, and cysteine 85/cysteine 92. Asparagine 55 carries N-linked (GlcNAc...) asparagine glycosylation. Substrate-binding positions include lysine 61–threonine 65 and lysine 86. An N-linked (GlcNAc...) asparagine glycan is attached at asparagine 100. Arginine 105 is a binding site for substrate. Residue histidine 145 is the Proton donor of the active site.

The protein belongs to the pancreatic ribonuclease family. Interacts (via N-terminus) with bacterial lipopolysaccharide (LPS).

The protein localises to the secreted. It is found in the lysosome. It localises to the cytoplasmic granule. Ribonuclease which shows a preference for the pyrimidines uridine and cytosine. Has potent antibacterial activity against a range of Gram-positive and Gram-negative bacteria, including P.aeruginosa, A.baumanii, M.luteus, S.aureus, E.faecalis, E.faecium, S.saprophyticus and E.coli. Causes loss of bacterial membrane integrity, and also promotes agglutination of Gram-negative bacteria. Probably contributes to urinary tract sterility. Bactericidal activity is independent of RNase activity. This chain is Ribonuclease K6 (RNASE6), found in Miopithecus talapoin (Angolan talapoin).